Consider the following 217-residue polypeptide: Peptide methionine sulfoxide reductase MsrA (217 aa).

The active site involves cysteine 56.

Belongs to the MsrA Met sulfoxide reductase family.

The catalysed reaction is L-methionyl-[protein] + [thioredoxin]-disulfide + H2O = L-methionyl-(S)-S-oxide-[protein] + [thioredoxin]-dithiol. It carries out the reaction [thioredoxin]-disulfide + L-methionine + H2O = L-methionine (S)-S-oxide + [thioredoxin]-dithiol. In terms of biological role, has an important function as a repair enzyme for proteins that have been inactivated by oxidation. Catalyzes the reversible oxidation-reduction of methionine sulfoxide in proteins to methionine. The chain is Peptide methionine sulfoxide reductase MsrA from Rippkaea orientalis (strain PCC 8801 / RF-1) (Cyanothece sp. (strain PCC 8801)).